The following is a 151-amino-acid chain: Deoxyuridine 5'-triphosphate nucleotidohydrolase (151 aa).

Substrate-binding positions include 70 to 72, asparagine 83, 87 to 89, and methionine 97; these read RSG and LID.

The protein belongs to the dUTPase family. It depends on Mg(2+) as a cofactor.

It carries out the reaction dUTP + H2O = dUMP + diphosphate + H(+). The protein operates within pyrimidine metabolism; dUMP biosynthesis; dUMP from dCTP (dUTP route): step 2/2. In terms of biological role, this enzyme is involved in nucleotide metabolism: it produces dUMP, the immediate precursor of thymidine nucleotides and it decreases the intracellular concentration of dUTP so that uracil cannot be incorporated into DNA. This is Deoxyuridine 5'-triphosphate nucleotidohydrolase from Tolumonas auensis (strain DSM 9187 / NBRC 110442 / TA 4).